The primary structure comprises 951 residues: Leucine-rich repeat-containing G-protein coupled receptor 4 (951 aa).

Positions 1–19 (MPGPLGLLCFLALGLRGSA) are cleaved as a signal peptide. Topologically, residues 20–544 (EPSGAAPPLC…LLGSWMIRLT (525 aa)) are extracellular. In terms of domain architecture, LRRNT spans 25–57 (APPLCAAPCSCDGDRRVDCSGKGLTAVPEGLSA). 2 cysteine pairs are disulfide-bonded: Cys29–Cys35 and Cys33–Cys43. 11 LRR repeats span residues 35-58 (CDGDRRVDCSGKGLTAVPEGLSAF), 59-79 (TQLLDISMNNITQLPEDAFKN), 81-103 (PFLEELRLAGNDLSFIHPKALSG), 104-127 (LKELKVLTLQNNQLKTVPSEAIRG), 128-151 (LSSLQSLRLDANHITSVPEDSFEG), 153-175 (TQLRHLWLDDNSLTEVPVHPLSN), 176-199 (LPTLQALTLALNKISSIPDFAFTN), 201-223 (SSLVVLHLHNNKIKSLGQHCFDG), 224-247 (LDNLETLDLNYNNLGEFPQAIKAL), 248-270 (PSLKELLFHSNSISVIPDGAFDG), and 272-294 (PLLKTIHLYDNPLSFVGNSAFHN). An N-linked (GlcNAc...) asparagine glycan is attached at Asn68. An N-linked (GlcNAc...) asparagine glycan is attached at Asn199. Asn294 and Asn314 each carry an N-linked (GlcNAc...) asparagine glycan. 5 LRR repeats span residues 318-341 (TVRLESLTLTGTKISSISNNLCQE), 342-363 (QKRLRTLDLSYNSIKDLPSFNG), 364-387 (CHALEEISLQRNQIHQIKEDTFQG), 388-411 (LTSLKILDLSRNLIHEIDDRAFAK), and 413-435 (GSITNLDVSFNELTSFPTEGLNG). Cys339 and Cys364 are disulfide-bonded. 2 disulfides stabilise this stretch: Cys470–Cys522 and Cys471–Cys476. A helical transmembrane segment spans residues 545-565 (VWFIFLVALFFNLLVILTTFA). At 566-575 (SCTSVPSSKL) the chain is on the cytoplasmic side. The chain crosses the membrane as a helical span at residues 576 to 596 (FIGLISVSNLFMGAYTGILTF). The Extracellular portion of the chain corresponds to 597–619 (LDAVSWGRFAEFGIWWEIGSGCK). Cys618 and Cys693 are disulfide-bonded. Residues 620–640 (IAGFLAVFSSESAIFLLMLAA) form a helical membrane-spanning segment. The Cytoplasmic segment spans residues 641-661 (VERSLSAKDMMKNGKSNHLRQ). A helical membrane pass occupies residues 662 to 682 (FRIAALLAFLGAAVAGSFPLF). At 683–703 (HRGEYSASPLCLPFPTGETPS) the chain is on the extracellular side. A helical transmembrane segment spans residues 704-724 (LGFTVTLVLLNSLAFLLMAII). The Cytoplasmic segment spans residues 725–756 (YTKLYCNLEKEDLSESSQSSMIKHVAWLIFTN). A helical transmembrane segment spans residues 757–777 (CIFFCPVAFFSFAPLITAVSI). The Extracellular portion of the chain corresponds to 778–783 (SPEIMK). Residues 784–804 (SVTLIFFPLPACLNPVLYVFF) traverse the membrane as a helical segment. Residues 805–951 (NPKFKEDWKL…YAYNLPRVKD (147 aa)) are Cytoplasmic-facing. A Phosphoserine modification is found at Ser920.

The protein belongs to the G-protein coupled receptor 1 family.

The protein resides in the cell membrane. Its function is as follows. Receptor for R-spondins that potentiates the canonical Wnt signaling pathway and is involved in the formation of various organs. Upon binding to R-spondins (RSPO1, RSPO2, RSPO3 or RSPO4), associates with phosphorylated LRP6 and frizzled receptors that are activated by extracellular Wnt receptors, triggering the canonical Wnt signaling pathway to increase expression of target genes. In contrast to classical G-protein coupled receptors, does not activate heterotrimeric G-proteins to transduce the signal. Its function as activator of the Wnt signaling pathway is required for the development of various organs, including liver, kidney, intestine, bone, reproductive tract and eye. May also act as a receptor for norrin (NDP), such results however required additional confirmation in vivo. Required during spermatogenesis to activate the Wnt signaling pathway in peritubular myoid cells. Required for the maintenance of intestinal stem cells and Paneth cell differentiation in postnatal intestinal crypts. Acts as a regulator of bone formation and remodeling. Involved in kidney development; required for maintaining the ureteric bud in an undifferentiated state. Involved in the development of the anterior segment of the eye. Required during erythropoiesis. Also acts as a negative regulator of innate immunity by inhibiting TLR2/TLR4 associated pattern-recognition and pro-inflammatory cytokine production. Plays an important role in regulating the circadian rhythms of plasma lipids, partially through regulating the rhythmic expression of MTTP. Required for proper development of GnRH neurons (gonadotropin-releasing hormone expressing neurons) that control the release of reproductive hormones from the pituitary gland. This is Leucine-rich repeat-containing G-protein coupled receptor 4 (LGR4) from Bos taurus (Bovine).